The sequence spans 166 residues: RNA polymerase sigma factor SigV (166 aa).

The Polymerase core binding motif lies at 38-51 (DIVQESIKKALSSV). The segment at residues 131-150 (LEEIAEITGENTNTVKTRLY) is a DNA-binding region (H-T-H motif).

It belongs to the sigma-70 factor family. ECF subfamily. Interacts with RsiV.

Functionally, sigma factors are initiation factors that promote the attachment of RNA polymerase to specific initiation sites and are then released. Positively regulates the expression of proteins involved in stress responses against bacitracin, paraquat and tellurite. This is RNA polymerase sigma factor SigV (sigV) from Bacillus subtilis (strain 168).